The primary structure comprises 144 residues: Phosphomevalonate dehydratase small subunit (144 aa).

Residue S65 is the Proton acceptor of the active site.

The protein belongs to the AcnX type II small subunit family. As to quaternary structure, heterodimer composed of a large subunit (PMDh-L) and a small subunit (PMDh-S).

The catalysed reaction is (R)-5-phosphomevalonate = (2E)-3-methyl-5-phosphooxypent-2-enoate + H2O. Its pathway is isoprenoid biosynthesis; isopentenyl diphosphate biosynthesis via mevalonate pathway. Its function is as follows. Component of a hydro-lyase that catalyzes the dehydration of mevalonate 5-phosphate (MVA5P) to form trans-anhydromevalonate 5-phosphate (tAHMP). Involved in the archaeal mevalonate (MVA) pathway, which provides fundamental precursors for isoprenoid biosynthesis, such as isopentenyl diphosphate (IPP) and dimethylallyl diphosphate (DMAPP). This chain is Phosphomevalonate dehydratase small subunit, found in Methanosarcina mazei (strain ATCC BAA-159 / DSM 3647 / Goe1 / Go1 / JCM 11833 / OCM 88) (Methanosarcina frisia).